The sequence spans 513 residues: ATP synthase subunit alpha (513 aa).

169 to 176 (GDRQTGKT) contributes to the ATP binding site.

It belongs to the ATPase alpha/beta chains family. As to quaternary structure, F-type ATPases have 2 components, CF(1) - the catalytic core - and CF(0) - the membrane proton channel. CF(1) has five subunits: alpha(3), beta(3), gamma(1), delta(1), epsilon(1). CF(0) has three main subunits: a(1), b(2) and c(9-12). The alpha and beta chains form an alternating ring which encloses part of the gamma chain. CF(1) is attached to CF(0) by a central stalk formed by the gamma and epsilon chains, while a peripheral stalk is formed by the delta and b chains.

The protein resides in the cell inner membrane. It carries out the reaction ATP + H2O + 4 H(+)(in) = ADP + phosphate + 5 H(+)(out). Produces ATP from ADP in the presence of a proton gradient across the membrane. The alpha chain is a regulatory subunit. The sequence is that of ATP synthase subunit alpha from Nitrosomonas europaea (strain ATCC 19718 / CIP 103999 / KCTC 2705 / NBRC 14298).